We begin with the raw amino-acid sequence, 62 residues long: Prokaryotic ubiquitin-like protein Pup (62 aa).

Positions 1–36 (MEKSSQIHGSKPGDDNADEPENAAGQSQIRKQGADD) are disordered. Positions 18-56 (DEPENAAGQSQIRKQGADDLLDEIDGLLESNAEEFVRSY) are ARC ATPase binding. Gln62 is modified (deamidated glutamine). Residue Gln62 forms an Isoglutamyl lysine isopeptide (Gln-Lys) (interchain with K-? in acceptor proteins) linkage.

The protein belongs to the prokaryotic ubiquitin-like protein family. In terms of assembly, strongly interacts with the proteasome-associated ATPase ARC through a hydrophobic interface; the interacting region of Pup lies in its C-terminal half. There is one Pup binding site per ARC hexamer ring. In terms of processing, is modified by deamidation of its C-terminal glutamine to glutamate by the deamidase Dop, a prerequisite to the subsequent pupylation process.

Its pathway is protein degradation; proteasomal Pup-dependent pathway. Its function is as follows. Protein modifier that is covalently attached to lysine residues of substrate proteins, thereby targeting them for proteasomal degradation. The tagging system is termed pupylation. The polypeptide is Prokaryotic ubiquitin-like protein Pup (Corynebacterium kroppenstedtii (strain DSM 44385 / JCM 11950 / CIP 105744 / CCUG 35717)).